Consider the following 144-residue polypeptide: Large ribosomal subunit protein uL15 (144 aa).

Residues 1–52 form a disordered region; the sequence is MRLNTISSAPGAKQAEKRVGRGIGSGWGKTCGRGHKGQKSRSGGFHKVGFEG. Positions 21 to 31 are enriched in gly residues; that stretch reads RGIGSGWGKTC.

Belongs to the universal ribosomal protein uL15 family. Part of the 50S ribosomal subunit.

Functionally, binds to the 23S rRNA. This is Large ribosomal subunit protein uL15 from Nitrosococcus oceani (strain ATCC 19707 / BCRC 17464 / JCM 30415 / NCIMB 11848 / C-107).